Reading from the N-terminus, the 367-residue chain is Aminomethyltransferase (367 aa).

Belongs to the GcvT family. As to quaternary structure, the glycine cleavage system is composed of four proteins: P, T, L and H.

It carries out the reaction N(6)-[(R)-S(8)-aminomethyldihydrolipoyl]-L-lysyl-[protein] + (6S)-5,6,7,8-tetrahydrofolate = N(6)-[(R)-dihydrolipoyl]-L-lysyl-[protein] + (6R)-5,10-methylene-5,6,7,8-tetrahydrofolate + NH4(+). Functionally, the glycine cleavage system catalyzes the degradation of glycine. This chain is Aminomethyltransferase, found in Parasynechococcus marenigrum (strain WH8102).